We begin with the raw amino-acid sequence, 320 residues long: Lipoyl synthase (320 aa).

The [4Fe-4S] cluster site is built by cysteine 67, cysteine 72, cysteine 78, cysteine 93, cysteine 97, cysteine 100, and serine 307. One can recognise a Radical SAM core domain in the interval 79-296 (FNHGTATFMI…RDKANEMGFE (218 aa)).

This sequence belongs to the radical SAM superfamily. Lipoyl synthase family. It depends on [4Fe-4S] cluster as a cofactor.

It localises to the cytoplasm. The catalysed reaction is [[Fe-S] cluster scaffold protein carrying a second [4Fe-4S](2+) cluster] + N(6)-octanoyl-L-lysyl-[protein] + 2 oxidized [2Fe-2S]-[ferredoxin] + 2 S-adenosyl-L-methionine + 4 H(+) = [[Fe-S] cluster scaffold protein] + N(6)-[(R)-dihydrolipoyl]-L-lysyl-[protein] + 4 Fe(3+) + 2 hydrogen sulfide + 2 5'-deoxyadenosine + 2 L-methionine + 2 reduced [2Fe-2S]-[ferredoxin]. It participates in protein modification; protein lipoylation via endogenous pathway; protein N(6)-(lipoyl)lysine from octanoyl-[acyl-carrier-protein]: step 2/2. Functionally, catalyzes the radical-mediated insertion of two sulfur atoms into the C-6 and C-8 positions of the octanoyl moiety bound to the lipoyl domains of lipoate-dependent enzymes, thereby converting the octanoylated domains into lipoylated derivatives. In Haemophilus influenzae (strain PittEE), this protein is Lipoyl synthase.